A 96-amino-acid polypeptide reads, in one-letter code: Co-chaperonin GroES 2 (96 aa).

It belongs to the GroES chaperonin family. In terms of assembly, heptamer of 7 subunits arranged in a ring. Interacts with the chaperonin GroEL.

It is found in the cytoplasm. In terms of biological role, together with the chaperonin GroEL, plays an essential role in assisting protein folding. The GroEL-GroES system forms a nano-cage that allows encapsulation of the non-native substrate proteins and provides a physical environment optimized to promote and accelerate protein folding. GroES binds to the apical surface of the GroEL ring, thereby capping the opening of the GroEL channel. This is Co-chaperonin GroES 2 from Vibrio vulnificus (strain CMCP6).